A 21-amino-acid polypeptide reads, in one-letter code: Cold shock protein CspSt (21 aa).

Residues 1–21 form the CSD domain; it reads KNGTVKWFNAEKGFGFITSED.

Its subcellular location is the cytoplasm. The protein is Cold shock protein CspSt of Streptococcus thermophilus.